The chain runs to 349 residues: Putative nuclease HARBI1 (349 aa).

One can recognise a DDE Tnp4 domain in the interval 148–300 (VDCIHVAIKA…IILACCVLHN (153 aa)). 4 residues coordinate a divalent metal cation: Asp-149, Asp-199, Asp-225, and Glu-261.

This sequence belongs to the HARBI1 family. In terms of assembly, interacts with NAIF1. The cofactor is a divalent metal cation.

It is found in the nucleus. Its subcellular location is the cytoplasm. Its function is as follows. Transposase-derived protein that may have nuclease activity (Potential). Does not have transposase activity. The chain is Putative nuclease HARBI1 (Harbi1) from Rattus norvegicus (Rat).